The chain runs to 340 residues: Ribose-phosphate pyrophosphokinase (340 aa).

ATP contacts are provided by residues 47–49 (NGE) and 106–107 (RQ). Mg(2+)-binding residues include His140 and Asp182. Residue Lys206 is part of the active site. D-ribose 5-phosphate-binding positions include Arg208, Asp234, and 238–242 (DTAGT).

It belongs to the ribose-phosphate pyrophosphokinase family. Class I subfamily. In terms of assembly, homohexamer. Requires Mg(2+) as cofactor.

Its subcellular location is the cytoplasm. It carries out the reaction D-ribose 5-phosphate + ATP = 5-phospho-alpha-D-ribose 1-diphosphate + AMP + H(+). It functions in the pathway metabolic intermediate biosynthesis; 5-phospho-alpha-D-ribose 1-diphosphate biosynthesis; 5-phospho-alpha-D-ribose 1-diphosphate from D-ribose 5-phosphate (route I): step 1/1. Functionally, involved in the biosynthesis of the central metabolite phospho-alpha-D-ribosyl-1-pyrophosphate (PRPP) via the transfer of pyrophosphoryl group from ATP to 1-hydroxyl of ribose-5-phosphate (Rib-5-P). This is Ribose-phosphate pyrophosphokinase from Bifidobacterium longum (strain NCC 2705).